The primary structure comprises 616 residues: Leucine aminopeptidase (616 aa).

Residues Gln128–Gln130 and Gly282–Asn286 contribute to the substrate site. His309 contributes to the Zn(2+) binding site. Glu310 functions as the Proton acceptor in the catalytic mechanism. Zn(2+)-binding residues include His313 and Glu332. Tyr397 serves as the catalytic Proton donor. Arg566–Lys568 provides a ligand contact to substrate.

The protein belongs to the peptidase M1 family. The cofactor is Zn(2+).

It is found in the cytoplasm. It carries out the reaction an epoxide + H2O = an ethanediol. In terms of biological role, aminopeptidase that preferentially cleaves di- and tripeptides. Also has low epoxide hydrolase activity (in vitro). Can hydrolyze the epoxide leukotriene LTA(4) but it forms preferentially 5,6-dihydroxy-7,9,11,14-eicosatetraenoic acid rather than the cytokine leukotriene B(4) as the product compared to the homologous mammalian enzyme (in vitro). In Arabidopsis thaliana (Mouse-ear cress), this protein is Leucine aminopeptidase (LKHA4).